We begin with the raw amino-acid sequence, 723 residues long: Aspartate--tRNA(Asp/Asn) ligase 1 (723 aa).

Glu-206 serves as a coordination point for L-aspartate. The segment at 230-233 is aspartate; sequence QLFK. Arg-252 lines the L-aspartate pocket. Residues 252-254 and Gln-261 contribute to the ATP site; that span reads RDE. His-481 is a binding site for L-aspartate. Position 516 (Glu-516) interacts with ATP. Arg-523 serves as a coordination point for L-aspartate. 568–571 contributes to the ATP binding site; sequence GMDR.

The protein belongs to the class-II aminoacyl-tRNA synthetase family. Type 1 subfamily. As to quaternary structure, homodimer.

The protein localises to the cytoplasm. It carries out the reaction tRNA(Asx) + L-aspartate + ATP = L-aspartyl-tRNA(Asx) + AMP + diphosphate. Its function is as follows. Aspartyl-tRNA synthetase with relaxed tRNA specificity since it is able to aspartylate not only its cognate tRNA(Asp) but also tRNA(Asn). Reaction proceeds in two steps: L-aspartate is first activated by ATP to form Asp-AMP and then transferred to the acceptor end of tRNA(Asp/Asn). In Syntrophus aciditrophicus (strain SB), this protein is Aspartate--tRNA(Asp/Asn) ligase 1.